A 172-amino-acid polypeptide reads, in one-letter code: MKLGIVIFPSKMIQDKANGLRKRYDPHYALVPPHITLKTPFEAQDEQLESIVNELHTIASKTNPFTLHVGKVGSFAPVNNVLYFKVEKTPELTFLNEEMHSGLFTQEREYAFVPHLTIGQGLSDAEHADVLGRLRMKDFYYEQPIDRFHLLYQLENGTWTVHETFRLGKGNN.

The Proton donor role is filled by H34. 2 short sequence motifs (HXTX) span residues 34–37 (HITL) and 115–118 (HLTI). Catalysis depends on H115, which acts as the Proton acceptor.

It belongs to the 2H phosphoesterase superfamily. YjcG family.

The sequence is that of Putative phosphoesterase BC_1225 from Bacillus cereus (strain ATCC 14579 / DSM 31 / CCUG 7414 / JCM 2152 / NBRC 15305 / NCIMB 9373 / NCTC 2599 / NRRL B-3711).